A 283-amino-acid polypeptide reads, in one-letter code: Nucleotide-binding protein IL0393 (283 aa).

ATP is bound at residue 8-15 (GRSGSGKT). 56 to 59 (DVRN) contacts GTP.

Belongs to the RapZ-like family.

Functionally, displays ATPase and GTPase activities. This chain is Nucleotide-binding protein IL0393, found in Idiomarina loihiensis (strain ATCC BAA-735 / DSM 15497 / L2-TR).